A 381-amino-acid chain; its full sequence is Gustatory and pheromone receptor 39a, isoform D (381 aa).

Residues 1–43 lie on the Cytoplasmic side of the membrane; the sequence is MKRNAFEELRVQLRTLKWLGVLRFTIDFNKCLVRENASEERSA. A helical membrane pass occupies residues 44–64; it reads WLYLIGVVGITCSLIVYSTYF. Over 65 to 78 the chain is Extracellular; the sequence is PSHFIMGKHNTTGN. Residue Asn74 is glycosylated (N-linked (GlcNAc...) asparagine). Residues 79 to 101 form a helical membrane-spanning segment; the sequence is CYALINIRSCSIVTMLIYTQLYI. Residues 102-128 are Cytoplasmic-facing; that stretch reads QRFRFVALLQSILRFNQISGSHREEGR. A helical transmembrane segment spans residues 129–149; sequence FAFYYYTHLSLLIICMLNYAY. Residues 150–172 lie on the Extracellular side of the membrane; the sequence is GYWTAGVRLTTIPIYLLQYGFSY. The helical transmembrane segment at 173-193 threads the bilayer; sequence LFLGQVVVLFACIQQILLSIL. The Cytoplasmic segment spans residues 194–234; that stretch reads KYYNQVVLKNIKSSKESREFYYNFCKYNQVIWLSYTEINHC. A helical transmembrane segment spans residues 235 to 255; it reads FGLLLLLVTGLILLITPSGPF. The Extracellular portion of the chain corresponds to 256–273; sequence YLVSTIFEGRFRQNWQFS. The helical transmembrane segment at 274-294 threads the bilayer; the sequence is LMSFTAILWSLPWIVLLVLAM. Residues 295 to 350 lie on the Cytoplasmic side of the membrane; sequence GRNDVQKEANKTAKMLTKVPRTGTGLDRMIEKFLLKNLRQKPILTAYGFFALDKST. Residues 351-371 form a helical membrane-spanning segment; it reads LFKLFTAIFTYMVILVQFKEM. Residues 372-381 are Extracellular-facing; sequence ENSTKSINKF. The N-linked (GlcNAc...) asparagine glycan is linked to Asn373.

Belongs to the insect chemoreceptor superfamily. Gustatory receptor (GR) family. Gr21a subfamily. In terms of tissue distribution, expressed in the adult labellar chemosensory neurons and adult thorax and abdomen.

The protein localises to the cell membrane. Functionally, gustatory receptor which mediates acceptance or avoidance behavior, depending on its substrates. Plays a role in sustaining courtship behavior in males, possibly through the reception of a stimulating arrestant pheromone. This chain is Gustatory and pheromone receptor 39a, isoform D (Gr39a), found in Drosophila melanogaster (Fruit fly).